We begin with the raw amino-acid sequence, 72 residues long: NAD(P)H-quinone oxidoreductase subunit O (72 aa).

The protein belongs to the complex I NdhO subunit family. In terms of assembly, NDH-1 can be composed of about 15 different subunits; different subcomplexes with different compositions have been identified which probably have different functions.

It localises to the cellular thylakoid membrane. It catalyses the reaction a plastoquinone + NADH + (n+1) H(+)(in) = a plastoquinol + NAD(+) + n H(+)(out). The catalysed reaction is a plastoquinone + NADPH + (n+1) H(+)(in) = a plastoquinol + NADP(+) + n H(+)(out). Functionally, NDH-1 shuttles electrons from an unknown electron donor, via FMN and iron-sulfur (Fe-S) centers, to quinones in the respiratory and/or the photosynthetic chain. The immediate electron acceptor for the enzyme in this species is believed to be plastoquinone. Couples the redox reaction to proton translocation, and thus conserves the redox energy in a proton gradient. Cyanobacterial NDH-1 also plays a role in inorganic carbon-concentration. The protein is NAD(P)H-quinone oxidoreductase subunit O of Gloeothece citriformis (strain PCC 7424) (Cyanothece sp. (strain PCC 7424)).